The sequence spans 352 residues: Ion-translocating oxidoreductase complex subunit D (352 aa).

5 consecutive transmembrane segments (helical) span residues 20-40 (IMLL…WFFG), 42-62 (GTLV…ALVL), 78-109 (ALLT…VIIA), 123-143 (PAMI…TSWL), and 148-168 (IAVN…GHTA). T187 carries the post-translational modification FMN phosphoryl threonine. 5 helical membrane passes run 214-234 (ILAG…GVWL), 242-262 (WHIP…GWLF), 267-287 (LAAP…FFIL), 301-321 (LIFG…GGYP), and 322-342 (DGVA…DYYT).

The protein belongs to the NqrB/RnfD family. In terms of assembly, the complex is composed of six subunits: RsxA, RsxB, RsxC, RsxD, RsxE and RsxG. FMN is required as a cofactor.

Its subcellular location is the cell inner membrane. In terms of biological role, part of a membrane-bound complex that couples electron transfer with translocation of ions across the membrane. Required to maintain the reduced state of SoxR. The chain is Ion-translocating oxidoreductase complex subunit D from Shigella dysenteriae serotype 1 (strain Sd197).